A 63-amino-acid polypeptide reads, in one-letter code: Alpha-conotoxin-like Am1.6 (63 aa).

A signal peptide spans 1–21; the sequence is MGMRMMFTVFLLVVLATTVVS. A propeptide spanning residues 22–46 is cleaved from the precursor; it reads FTSYRASDGRNAAAKASDLIALTVR. The ser-Xaa-Pro motif, crucial for potent interaction with nAChR stretch occupies residues 50-52; sequence SRP.

This sequence belongs to the conotoxin A superfamily. In terms of processing, is not hydroxylated. Contains 2 disulfide bonds. In terms of tissue distribution, expressed by the venom duct.

The protein resides in the secreted. Functionally, alpha-conotoxins act on postsynaptic membranes, they bind to the nicotinic acetylcholine receptors (nAChR) and thus inhibit them. This chain is Alpha-conotoxin-like Am1.6, found in Conus amadis (Amadis cone).